The chain runs to 152 residues: Large ribosomal subunit protein uL15 (152 aa).

Residues 1–66 (MRSNPMTLRL…GFEGGQTPMQ (66 aa)) form a disordered region. The segment covering 28–38 (RGIGSGLGKTA) has biased composition (gly residues). A compositionally biased stretch (basic residues) spans 39–52 (GRGHKGSFARKGGG).

This sequence belongs to the universal ribosomal protein uL15 family. As to quaternary structure, part of the 50S ribosomal subunit.

Functionally, binds to the 23S rRNA. This is Large ribosomal subunit protein uL15 from Xanthomonas oryzae pv. oryzae (strain KACC10331 / KXO85).